A 293-amino-acid polypeptide reads, in one-letter code: Ribosomal protein L11 methyltransferase (293 aa).

4 residues coordinate S-adenosyl-L-methionine: Thr145, Gly166, Asp188, and Asn230.

It belongs to the methyltransferase superfamily. PrmA family.

It is found in the cytoplasm. It catalyses the reaction L-lysyl-[protein] + 3 S-adenosyl-L-methionine = N(6),N(6),N(6)-trimethyl-L-lysyl-[protein] + 3 S-adenosyl-L-homocysteine + 3 H(+). Functionally, methylates ribosomal protein L11. This chain is Ribosomal protein L11 methyltransferase, found in Actinobacillus pleuropneumoniae serotype 5b (strain L20).